A 587-amino-acid chain; its full sequence is Vesicular glutamate transporter 2.2 (587 aa).

The Cytoplasmic portion of the chain corresponds to 1 to 71 (MDTVKERVLA…CTCFGLPRRY (71 aa)). A helical membrane pass occupies residues 72–92 (IIAIMSGLGFCISFGIRCNLG). Over 93–125 (VAIVDMVNNSTIHKGGKIIIKGKAKFNWDPETV) the chain is Vesicular. Residues Asn-100 and Asn-101 are each glycosylated (N-linked (GlcNAc...) asparagine). A helical transmembrane segment spans residues 126–146 (GMIHGSFFWGYTVTQIPGGYI). Residues 147–149 (SSR) are Cytoplasmic-facing. The helical transmembrane segment at 150 to 170 (LAANRVFGAAILLTSTLNMFI) threads the bilayer. Over 171 to 180 (PSAARVHYGC) the chain is Vesicular. Residues 181–203 (VMFVRILQGLVEGVTYPACHGIW) form a helical membrane-spanning segment. Residues 204–217 (SKWAPPLERSRLAT) are Cytoplasmic-facing. A helical transmembrane segment spans residues 218–238 (TSFCGSYAGAVVAMPLAGILV). Residues 239-245 (QYSGWSS) lie on the Vesicular side of the membrane. The chain crosses the membrane as a helical span at residues 246–266 (VFYIYGSFGIVWYMFWILVSY). The Cytoplasmic portion of the chain corresponds to 267–311 (ESPADHPTITDEERTYIEESIGESAKLLGAMEKYKTPWRKFFTSM). The chain crosses the membrane as a helical span at residues 312–332 (PVYAIIVANFCRSWTFYLLLI). Topologically, residues 333–350 (SQPAYFEEVFGFEISKVG) are vesicular. The helical transmembrane segment at 351-371 (MVSALPHLVMTIIVPIGGQLA) threads the bilayer. At 372–387 (DYLRSKNILTTTTVRK) the chain is on the cytoplasmic side. The chain crosses the membrane as a helical span at residues 388-408 (IMNCGGFGMEATLLLVVGFSH). Over 409 to 410 (SK) the chain is Vesicular. The helical transmembrane segment at 411–431 (GVAISFLVLAVGFSGFAISGF) threads the bilayer. Residues 432-444 (NVNHLDIAPRYAS) lie on the Cytoplasmic side of the membrane. The chain crosses the membrane as a helical span at residues 445–465 (ILMGISNGVGTLSGMVCPLIV). Topologically, residues 466-479 (GAMTKNKTREEWQN) are vesicular. A glycan (N-linked (GlcNAc...) asparagine) is linked at Asn-471. A helical transmembrane segment spans residues 480–500 (VFLIASLVHYGGVIFYGIFAS). Residues 501-587 (GEKQPWADPE…ERTYTGDGYS (87 aa)) are Cytoplasmic-facing.

Belongs to the major facilitator superfamily. Sodium/anion cotransporter family. VGLUT subfamily. Expressed in spinal cord.

Its subcellular location is the cytoplasmic vesicle. It localises to the secretory vesicle. The protein resides in the synaptic vesicle membrane. The protein localises to the membrane. It is found in the synapse. Its subcellular location is the synaptosome. It localises to the cell membrane. The enzyme catalyses L-glutamate(out) = L-glutamate(in). The catalysed reaction is 3 Na(+)(out) + phosphate(out) = 3 Na(+)(in) + phosphate(in). It catalyses the reaction phosphate(in) = phosphate(out). It carries out the reaction K(+)(in) + H(+)(out) = K(+)(out) + H(+)(in). The enzyme catalyses chloride(in) = chloride(out). Its activity is regulated as follows. Chloride channel activity is allosterically activated by lumenal H(+) and Cl(-) leading to synaptic vesicles acidification. The L-glutamate transport activity is allosterically activated by lumenal H(+) and Cl(-). The allosteric requirement for H(+) efficiently prevents non-vesicular efflux across the plasma membrane. The L-glutamate uniporter activity exhibits a biphasic dependence on chloride concentration. Functionally, multifunctional transporter that transports L-glutamate as well as multiple ions such as chloride, proton, potassium, sodium and phosphate. At the synaptic vesicle membrane, mainly functions as a uniporter which transports preferentially L-glutamate but also, phosphate from the cytoplasm into synaptic vesicles at presynaptic nerve terminals of excitatory neural cells. The L-glutamate or phosphate uniporter activity is electrogenic and is driven by the proton electrochemical gradient, mainly by the electrical gradient established by the vacuolar H(+)-ATPase across the synaptic vesicle membrane. In addition, functions as a chloride channel that allows a chloride permeation through the synaptic vesicle membrane therefore affects the proton electrochemical gradient and promotes synaptic vesicles acidification. Moreover, functions as a vesicular K(+)/H(+) antiport allowing to maintain the electrical gradient and to decrease chemical gradient and therefore sustain vesicular L-glutamate uptake. The vesicular H(+)/H(+) antiport activity is electroneutral. At the plasma membrane, following exocytosis, functions as a symporter of Na(+) and phosphate from the extracellular space to the cytoplasm allowing synaptic phosphate homeostasis regulation. The symporter activity is driven by an inside negative membrane potential and is electrogenic. Also involved in the regulation of retinal hyaloid vessel regression during postnatal development. May also play a role in the endocrine L-glutamatergic system of other tissues such as pineal gland and pancreas. This is Vesicular glutamate transporter 2.2 (slc17a6a) from Danio rerio (Zebrafish).